The chain runs to 172 residues: Large ribosomal subunit protein uL10 (172 aa).

The protein belongs to the universal ribosomal protein uL10 family. In terms of assembly, part of the ribosomal stalk of the 50S ribosomal subunit. The N-terminus interacts with L11 and the large rRNA to form the base of the stalk. The C-terminus forms an elongated spine to which L12 dimers bind in a sequential fashion forming a multimeric L10(L12)X complex.

Forms part of the ribosomal stalk, playing a central role in the interaction of the ribosome with GTP-bound translation factors. The chain is Large ribosomal subunit protein uL10 from Chelativorans sp. (strain BNC1).